We begin with the raw amino-acid sequence, 53 residues long: Small polypeptide DEVIL 7 (53 aa).

A compositionally biased stretch (basic and acidic residues) spans 1–16 (MREKYTKEEAVKNWEK). Residues 1–28 (MREKYTKEEAVKNWEKKKNKPSSPKGVG) form a disordered region. The required for DVL/RTFL small polypeptide activity stretch occupies residues 22–53 (SSPKGVGEFLKKKKGRFYIIGKCITMLLCSHK). Residues 30–46 (FLKKKKGRFYIIGKCIT) traverse the membrane as a helical segment.

Belongs to the DVL/RTFL small polypeptides family.

It is found in the cell membrane. Small polypeptide acting as a regulatory molecule which coordinates cellular responses required for differentiation, growth and development, probably by restricting polar cell proliferation in lateral organs and coordinating socket cell recruitment and differentiation at trichome sites. The protein is Small polypeptide DEVIL 7 of Arabidopsis thaliana (Mouse-ear cress).